Consider the following 1416-residue polypeptide: DNA-directed RNA polymerase subunit beta' (1416 aa).

Zn(2+)-binding residues include cysteine 60, cysteine 62, cysteine 75, and cysteine 78. Mg(2+) is bound by residues aspartate 449, aspartate 451, and aspartate 453. Zn(2+)-binding residues include cysteine 781, cysteine 855, cysteine 862, and cysteine 865.

It belongs to the RNA polymerase beta' chain family. In terms of assembly, the RNAP catalytic core consists of 2 alpha, 1 beta, 1 beta' and 1 omega subunit. When a sigma factor is associated with the core the holoenzyme is formed, which can initiate transcription. Requires Mg(2+) as cofactor. The cofactor is Zn(2+).

It catalyses the reaction RNA(n) + a ribonucleoside 5'-triphosphate = RNA(n+1) + diphosphate. In terms of biological role, DNA-dependent RNA polymerase catalyzes the transcription of DNA into RNA using the four ribonucleoside triphosphates as substrates. This is DNA-directed RNA polymerase subunit beta' from Treponema pallidum (strain Nichols).